The primary structure comprises 157 residues: uncharacterized protein (157 aa).

The N-acetyltransferase domain occupies 9–154 (LLINYKTLDE…ETNSNAITNE (146 aa)).

This is an uncharacterized protein from Bacillus mycoides (strain KBAB4) (Bacillus weihenstephanensis).